We begin with the raw amino-acid sequence, 313 residues long: Porphobilinogen deaminase (313 aa).

C242 carries the S-(dipyrrolylmethanemethyl)cysteine modification.

The protein belongs to the HMBS family. In terms of assembly, monomer. The cofactor is dipyrromethane.

The enzyme catalyses 4 porphobilinogen + H2O = hydroxymethylbilane + 4 NH4(+). The protein operates within porphyrin-containing compound metabolism; protoporphyrin-IX biosynthesis; coproporphyrinogen-III from 5-aminolevulinate: step 2/4. Functionally, tetrapolymerization of the monopyrrole PBG into the hydroxymethylbilane pre-uroporphyrinogen in several discrete steps. The protein is Porphobilinogen deaminase of Yersinia pseudotuberculosis serotype O:1b (strain IP 31758).